Here is a 204-residue protein sequence, read N- to C-terminus: Ribosome maturation factor RimP (204 aa).

A disordered region spans residues 177–204; sequence NFDESQFDEIQETEGEEADEAETPITRH. Over residues 181–198 the composition is skewed to acidic residues; that stretch reads SQFDEIQETEGEEADEAE.

Belongs to the RimP family.

The protein resides in the cytoplasm. Its function is as follows. Required for maturation of 30S ribosomal subunits. This is Ribosome maturation factor RimP from Cereibacter sphaeroides (strain ATCC 17025 / ATH 2.4.3) (Rhodobacter sphaeroides).